The following is a 57-amino-acid chain: UPF0391 membrane protein Xaut_1725 (57 aa).

2 helical membrane-spanning segments follow: residues 4–24 (WAVT…GGIA) and 30–50 (IAKI…VAGL).

Belongs to the UPF0391 family.

The protein localises to the cell membrane. The polypeptide is UPF0391 membrane protein Xaut_1725 (Xanthobacter autotrophicus (strain ATCC BAA-1158 / Py2)).